The chain runs to 266 residues: MEKGSLKSKNEKEQLSKAKASVSSLNKVIQTKLTVGNLGLGLVVIQNGPYLQISHLINKGAAASDGILQPGDVLISVGHANVLGYTLREFLKLLQNITIGTVLQIKAYRGFLEIPQEWQDVYDLIPETKFPIPHTPKKTEPARESLVKDDHEEAVLDKKLKYYRYPRSVWNHPVRTPISISTEWHGYEKKERTISVGRDINSDVVIHKDDKKELRAPSPYWAMVEQDRAISSSSSSTANSSSSDAFWLEDYAQVEEGNGKQVSKFG.

One can recognise a PDZ domain in the interval 27–109 (KVIQTKLTVG…GTVLQIKAYR (83 aa)).

The chain is PDZ domain-containing protein 9 (Pdzd9) from Mus musculus (Mouse).